Reading from the N-terminus, the 142-residue chain is FAD synthase (142 aa).

Residues 9–10 (TF), 14–17 (HPGH), and Asp-92 contribute to the ATP site.

Belongs to the archaeal FAD synthase family. As to quaternary structure, homodimer. It depends on a divalent metal cation as a cofactor.

The enzyme catalyses FMN + ATP + H(+) = FAD + diphosphate. It participates in cofactor biosynthesis; FAD biosynthesis; FAD from FMN: step 1/1. Its function is as follows. Catalyzes the transfer of the AMP portion of ATP to flavin mononucleotide (FMN) to produce flavin adenine dinucleotide (FAD) coenzyme. The chain is FAD synthase from Haloferax volcanii (strain ATCC 29605 / DSM 3757 / JCM 8879 / NBRC 14742 / NCIMB 2012 / VKM B-1768 / DS2) (Halobacterium volcanii).